We begin with the raw amino-acid sequence, 252 residues long: Sororin (252 aa).

Disordered regions lie at residues 1 to 48 and 72 to 142; these read MSGR…WPKT and AVQS…SKKV. 6 positions are modified to phosphoserine: serine 21, serine 33, serine 35, serine 75, serine 79, and serine 83. Basic and acidic residues predominate over residues 86–104; it reads LEKENEPPGRELTKEDLFK. Positions 88-90 match the KEN box motif; that stretch reads KEN. Threonine 98 carries the phosphothreonine modification. The segment covering 105 to 116 has biased composition (low complexity); it reads THSVPATPTSTP. Residue serine 107 is modified to Phosphoserine. A phosphothreonine mark is found at threonine 111 and threonine 115. Basic and acidic residues predominate over residues 124-140; sequence SSSKEGELDARDLEMSK. Serine 154 is modified (phosphoserine). Threonine 159 carries the phosphothreonine modification. Residues 166–168 carry the FGF motif motif; that stretch reads FGF. Residues 199–222 are disordered; that stretch reads WAPDMTLPGISPPPEKQKRKKKKM. Residue serine 209 is modified to Phosphoserine. The C-terminal Sororin domain stretch occupies residues 230–252; it reads LDEWAAAMNAEFEAAEQFDLLVE.

Belongs to the sororin family. Interacts with the APC/C complex. Interacts with the chromatin-bound cohesin complex; the interaction is indirect, occurs after DNA replication and requires acetylation of the cohesin component SMC3. Interacts (via the FGF motif) with PDS5A and PDS5B; the interaction is direct and prevents the interaction of PDS5A with WAPL. Post-translationally, phosphorylated. Phosphorylation, as cells enter mitosis, disrupts the interaction with PDS5A and relieves the inhibition of WAPL by CDCA5. In terms of processing, ubiquitinated by the APC/C complex in G1, leading to its degradation.

It is found in the nucleus. The protein resides in the chromosome. The protein localises to the cytoplasm. Functionally, regulator of sister chromatid cohesion in mitosis stabilizing cohesin complex association with chromatin. May antagonize the action of WAPL which stimulates cohesin dissociation from chromatin. Cohesion ensures that chromosome partitioning is accurate in both meiotic and mitotic cells and plays an important role in DNA repair. Required for efficient DNA double-stranded break repair. The sequence is that of Sororin (CDCA5) from Homo sapiens (Human).